Consider the following 149-residue polypeptide: UPF0260 protein Pmen_1776 (149 aa).

It belongs to the UPF0260 family.

The protein is UPF0260 protein Pmen_1776 of Ectopseudomonas mendocina (strain ymp) (Pseudomonas mendocina).